The following is a 1444-amino-acid chain: Protein shortage in chiasmata 1 ortholog (1444 aa).

Residues 1106–1117 (SITKSPQISSPQ) are compositionally biased toward low complexity. The interval 1106-1129 (SITKSPQISSPQENRNQISTLSSQ) is disordered.

It belongs to the XPF family. Highly divergent. Interacts with TEX11. Interacts with SPO16.

The protein localises to the chromosome. In terms of biological role, ATPase required during meiosis for the formation of crossover recombination intermediates. Binds DNA: preferentially binds to single-stranded DNA and DNA branched structures. Does not show nuclease activity in vitro, but shows ATPase activity, which is stimulated by the presence of single-stranded DNA. Plays a key role in homologous recombination and crossing-over in meiotic prophase I in male and female germ cells. Required for proper synaptonemal complex assembly and homologous chromosome pairing. Requiref for recruitment TEX11 and MSH4 to recombination intermediates. The polypeptide is Protein shortage in chiasmata 1 ortholog (Homo sapiens (Human)).